The sequence spans 173 residues: Alpha-crystallin A chain (173 aa).

M1 bears the N-acetylmethionine mark. Residues 1 to 63 (MDIAIQHPWF…RTVLDSGISE (63 aa)) are required for complex formation with BFSP1 and BFSP2. Q6 is subject to Deamidated glutamine; partial. K11 carries N-linked (Glc) (glycation) lysine glycosylation. S45 is modified (phosphoserine). Q50 carries the post-translational modification Deamidated glutamine; partial. The sHSP domain maps to 52–162 (LFRTVLDSGI…GHSERAIPVS (111 aa)). Position 70 is an N6-acetyllysine (K70). A glycan (N-linked (Glc) (glycation) lysine) is linked at K78. The residue at position 90 (Q90) is a Deamidated glutamine; partial. The residue at position 99 (K99) is an N6-acetyllysine. H100 contributes to the Zn(2+) binding site. N101 is subject to Deamidated asparagine; partial. Zn(2+) is bound by residues E102 and H107. Position 122 is a phosphoserine (S122). N123 carries the deamidated asparagine; partial modification. Residues 144–173 (PKIPSGVDAGHSERAIPVSREEKPSSAPSS) form a disordered region. Residues 153–167 (GHSERAIPVSREEKP) show a composition bias toward basic and acidic residues. H154 contacts Zn(2+). The segment at 157–163 (RAIPVSR) is important for oligomerization. S162 carries O-linked (GlcNAc) serine glycosylation.

This sequence belongs to the small heat shock protein (HSP20) family. As to quaternary structure, heteromer composed of three CRYAA and one CRYAB subunits. Inter-subunit bridging via zinc ions enhances stability, which is crucial as there is no protein turn over in the lens. Can also form homodimers and homotetramers (dimers of dimers) which serve as the building blocks of homooligomers. Within homooligomers, the zinc-binding motif is created from residues of 3 different molecules. His-100 and Glu-102 from one molecule are ligands of the zinc ion, and His-107 and His-154 residues from additional molecules complete the site with tetrahedral coordination geometry. Part of a complex required for lens intermediate filament formation composed of BFSP1, BFSP2 and CRYAA. Post-translationally, acetylation at Lys-70 may increase chaperone activity. In terms of processing, undergoes age-dependent proteolytical cleavage at the C-terminus.

Its subcellular location is the cytoplasm. It localises to the nucleus. In terms of biological role, contributes to the transparency and refractive index of the lens. Acts as a chaperone, preventing aggregation of various proteins under a wide range of stress conditions. Required for the correct formation of lens intermediate filaments as part of a complex composed of BFSP1, BFSP2 and CRYAA. The chain is Alpha-crystallin A chain (CRYAA) from Bos taurus (Bovine).